The chain runs to 309 residues: HPr kinase/phosphorylase (309 aa).

Active-site residues include His-138 and Lys-159. An ATP-binding site is contributed by 153 to 160 (GKSGVGKS). Ser-160 serves as a coordination point for Mg(2+). Asp-177 serves as the catalytic Proton acceptor; for phosphorylation activity. Proton donor; for dephosphorylation activity. The segment at 201 to 210 (LEIRGLGIIN) is important for the catalytic mechanism of both phosphorylation and dephosphorylation. Residue Glu-202 participates in Mg(2+) binding. Arg-243 is an active-site residue. The important for the catalytic mechanism of dephosphorylation stretch occupies residues 264 to 269 (PVRPGR).

It belongs to the HPrK/P family. In terms of assembly, homohexamer. It depends on Mg(2+) as a cofactor.

The catalysed reaction is [HPr protein]-L-serine + ATP = [HPr protein]-O-phospho-L-serine + ADP + H(+). It catalyses the reaction [HPr protein]-O-phospho-L-serine + phosphate + H(+) = [HPr protein]-L-serine + diphosphate. Functionally, catalyzes the ATP- as well as the pyrophosphate-dependent phosphorylation of a specific serine residue in HPr, a phosphocarrier protein of the phosphoenolpyruvate-dependent sugar phosphotransferase system (PTS). HprK/P also catalyzes the pyrophosphate-producing, inorganic phosphate-dependent dephosphorylation (phosphorolysis) of seryl-phosphorylated HPr (P-Ser-HPr). The two antagonistic activities of HprK/P are regulated by several intracellular metabolites, which change their concentration in response to the absence or presence of rapidly metabolisable carbon sources (glucose, fructose, etc.) in the growth medium. Also phosphorylates/dephosphorylates the HPr-like catabolite repression protein crh on a specific serine residue. Therefore, by controlling the phosphorylation state of HPr and crh, HPrK/P is a sensor enzyme that plays a major role in the regulation of carbon metabolism and sugar transport: it mediates carbon catabolite repression (CCR), and regulates PTS-catalyzed carbohydrate uptake and inducer exclusion. The polypeptide is HPr kinase/phosphorylase (Geobacillus thermodenitrificans (strain NG80-2)).